Reading from the N-terminus, the 187-residue chain is UPF0232 protein MMAR_0004 (187 aa).

Disordered regions lie at residues 1–77 (MSDD…QPLG) and 166–187 (ASPS…DTYG). Residues 14 to 30 (AARDELSGMDLVRRTLA) are compositionally biased toward basic and acidic residues. Residues 31 to 55 (EARAAARARGQDPGRGFAAGPAPRR) show a composition bias toward low complexity.

Belongs to the UPF0232 family.

The polypeptide is UPF0232 protein MMAR_0004 (Mycobacterium marinum (strain ATCC BAA-535 / M)).